Reading from the N-terminus, the 166-residue chain is Putative universal stress protein SA1532 (166 aa).

The protein belongs to the universal stress protein A family.

The protein localises to the cytoplasm. This chain is Putative universal stress protein SA1532, found in Staphylococcus aureus (strain N315).